A 147-amino-acid chain; its full sequence is MSELIVNVINGPNLGRLGRREPAVYGGTTHDELVALIEREAAELGLKAVVRQSDSEAQLLDWIHQAADAAEPVILNAGGLTHTSVALRDACAELSAPLIEVHISNVHAREEFRRHSYLSPIATGVIVGLGIQGYLLALRYLAEHVGT.

Residue Y25 is the Proton acceptor of the active site. Residues N76, H82, and D89 each coordinate substrate. Catalysis depends on H102, which acts as the Proton donor. Substrate contacts are provided by residues I103–S104 and R113.

It belongs to the type-II 3-dehydroquinase family. Homododecamer.

The catalysed reaction is 3-dehydroquinate = 3-dehydroshikimate + H2O. Its pathway is metabolic intermediate biosynthesis; chorismate biosynthesis; chorismate from D-erythrose 4-phosphate and phosphoenolpyruvate: step 3/7. In terms of biological role, catalyzes a trans-dehydration via an enolate intermediate. This is 3-dehydroquinate dehydratase from Mycobacterium tuberculosis (strain ATCC 25177 / H37Ra).